We begin with the raw amino-acid sequence, 512 residues long: Glutathione-binding protein GsiB (512 aa).

The N-terminal stretch at 1 to 26 (MARAVHRSGLVALGIATALMASCAFA) is a signal peptide.

Belongs to the bacterial solute-binding protein 5 family. The complex is composed of two ATP-binding proteins (GsiA), two transmembrane proteins (GsiC and GsiD) and a solute-binding protein (GsiB).

It is found in the periplasm. Functionally, part of the ABC transporter complex GsiABCD involved in glutathione import. Binds glutathione. This Shigella boydii serotype 4 (strain Sb227) protein is Glutathione-binding protein GsiB.